The sequence spans 92 residues: Small ribosomal subunit protein uS19 (92 aa).

It belongs to the universal ribosomal protein uS19 family.

In terms of biological role, protein S19 forms a complex with S13 that binds strongly to the 16S ribosomal RNA. The chain is Small ribosomal subunit protein uS19 from Buchnera aphidicola subsp. Schizaphis graminum (strain Sg).